Here is a 204-residue protein sequence, read N- to C-terminus: MTDYTVHIVDDEEPVRKSLAFMLTMNGFAVKMHQSAEAFLAFAPDVRNGVLVTDLRMPDMSGVELLRNLGDLKINIPSIVITGHGDVPMAVEAMKAGAVDFIEKPFEDTVIIEAIERASEHLVAAEADVDDANDIRARLQTLSERERQVLSAVVAGLPNKSIAYDLDISPRTVEVHRANVMAKMKAKSLPHLVRMALAGGFGPS.

The region spanning 5 to 119 (TVHIVDDEEP…VIIEAIERAS (115 aa)) is the Response regulatory domain. Positions 10, 11, 54, and 56 each coordinate Mg(2+). Asp54 carries the post-translational modification 4-aspartylphosphate. One can recognise an HTH luxR-type domain in the interval 135-200 (IRARLQTLSE…HLVRMALAGG (66 aa)). Positions 159–178 (NKSIAYDLDISPRTVEVHRA) form a DNA-binding region, H-T-H motif.

The cofactor is Mg(2+). In terms of processing, phosphorylated by FixL.

It is found in the cytoplasm. Functionally, fixJ, when activated by FixL, induces the expression of both nifA, required for activation of classical nif and fix genes, and fixK, required for FixN activation. This Rhizobium meliloti (strain 1021) (Ensifer meliloti) protein is Transcriptional regulatory protein FixJ (fixJ).